We begin with the raw amino-acid sequence, 267 residues long: Proteasome subunit alpha (267 aa).

The tract at residues 231 to 267 is disordered; sequence ETLLQERDSKESAESEEPKESEEGKKTGKKSDADSSD. Positions 234-267 are enriched in basic and acidic residues; that stretch reads LQERDSKESAESEEPKESEEGKKTGKKSDADSSD.

The protein belongs to the peptidase T1A family. As to quaternary structure, the 20S proteasome core is composed of 14 alpha and 14 beta subunits that assemble into four stacked heptameric rings, resulting in a barrel-shaped structure. The two inner rings, each composed of seven catalytic beta subunits, are sandwiched by two outer rings, each composed of seven alpha subunits. The catalytic chamber with the active sites is on the inside of the barrel. Has a gated structure, the ends of the cylinder being occluded by the N-termini of the alpha-subunits. Is capped by the proteasome-associated ATPase, ARC.

The protein resides in the cytoplasm. It functions in the pathway protein degradation; proteasomal Pup-dependent pathway. The formation of the proteasomal ATPase ARC-20S proteasome complex, likely via the docking of the C-termini of ARC into the intersubunit pockets in the alpha-rings, may trigger opening of the gate for substrate entry. Interconversion between the open-gate and close-gate conformations leads to a dynamic regulation of the 20S proteasome proteolysis activity. Component of the proteasome core, a large protease complex with broad specificity involved in protein degradation. The sequence is that of Proteasome subunit alpha from Mycobacterium marinum (strain ATCC BAA-535 / M).